The chain runs to 315 residues: Methylglutaconyl-CoA hydratase, mitochondrial (315 aa).

A mitochondrion-targeting transit peptide spans 1–43; it reads MAAAAAPGALGALSAGRVRLVAACCARLGSAAWARGTAPRRGY. Lys76 carries the N6-acetyllysine; alternate modification. Position 76 is an N6-succinyllysine; alternate (Lys76). The segment at 81-95 is RNA-binding; that stretch reads KNLLKMLSKAVDALK. Lys85 carries the post-translational modification N6-succinyllysine. 2 positions are modified to N6-acetyllysine; alternate: Lys89 and Lys120. Lys89 and Lys120 each carry N6-succinyllysine; alternate. Lys124 and Lys136 each carry N6-succinyllysine. N6-acetyllysine; alternate is present on residues Lys180 and Lys187. N6-succinyllysine; alternate occurs at positions 180 and 187. Lys305 bears the N6-succinyllysine mark.

It belongs to the enoyl-CoA hydratase/isomerase family. Homohexamer.

Its subcellular location is the mitochondrion. The enzyme catalyses (3S)-3-hydroxy-3-methylglutaryl-CoA = 3-methyl-(2E)-glutaconyl-CoA + H2O. It catalyses the reaction (3S)-citramalyl-CoA = itaconyl-CoA + H2O. The catalysed reaction is 3-hydroxyisovaleryl-CoA = 3-methylbut-2-enoyl-CoA + H2O. It carries out the reaction (S)-3-hydroxyglutaryl-CoA = (2E)-glutaconyl-CoA + H2O. The protein operates within amino-acid degradation; L-leucine degradation; (S)-3-hydroxy-3-methylglutaryl-CoA from 3-isovaleryl-CoA: step 3/3. Its function is as follows. Catalyzes the fifth step in the leucine degradation pathway, the reversible hydration of 3-methylglutaconyl-CoA (3-MG-CoA) to 3-hydroxy-3-methylglutaryl-CoA (HMG-CoA). Can catalyze the reverse reaction but at a much lower rate in vitro. HMG-CoA is then quickly degraded by another enzyme (such as HMG-CoA lyase) to give acetyl-CoA and acetoacetate. Uses other substrates such as (2E)-glutaconyl-CoA efficiently in vitro, and to a lesser extent 3-methylcrotonyl-CoA (3-methyl-(2E)-butenoyl-CoA), crotonyl-CoA ((2E)-butenoyl-CoA) and 3-hydroxybutanoyl-CoA (the missing carboxylate reduces affinity to the active site). Originally it was identified as an RNA-binding protein as it binds to AU-rich elements (AREs) in vitro. AREs direct rapid RNA degradation and mRNA deadenylation. Might have itaconyl-CoA hydratase activity, converting itaconyl-CoA into citramalyl-CoA in the C5-dicarboxylate catabolism pathway. The C5-dicarboxylate catabolism pathway is required to detoxify itaconate, an antimicrobial metabolite and immunomodulator produced by macrophages during certain infections, that can act as a vitamin B12-poisoning metabolite. In Rattus norvegicus (Rat), this protein is Methylglutaconyl-CoA hydratase, mitochondrial.